The primary structure comprises 489 residues: 3-octaprenyl-4-hydroxybenzoate carboxy-lyase (489 aa).

Asn-172 serves as a coordination point for Mn(2+). Prenylated FMN-binding positions include 175-177, 189-191, and 194-195; these read IYR, RWL, and RG. Mn(2+) is bound at residue Glu-238. The active-site Proton donor is Asp-287.

Belongs to the UbiD family. Homohexamer. Prenylated FMN serves as cofactor. It depends on Mn(2+) as a cofactor.

Its subcellular location is the cell membrane. It catalyses the reaction a 4-hydroxy-3-(all-trans-polyprenyl)benzoate + H(+) = a 2-(all-trans-polyprenyl)phenol + CO2. The protein operates within cofactor biosynthesis; ubiquinone biosynthesis. Catalyzes the decarboxylation of 3-octaprenyl-4-hydroxy benzoate to 2-octaprenylphenol, an intermediate step in ubiquinone biosynthesis. The protein is 3-octaprenyl-4-hydroxybenzoate carboxy-lyase of Psychromonas ingrahamii (strain DSM 17664 / CCUG 51855 / 37).